Consider the following 511-residue polypeptide: MDVCSWKEMEVALVNFDNSDEIHEEPGYATDFDPTSSKGRPGSSPFSNWRVLISDNTNHETAFSKIPGEYVDPPGPEPVVLNEGNQRVIINIAGLRFETQLRTLNQFPETLLGDREKRMQFFDSMRNEYFFDRNRPSFDGILYYYQSGGKIRRPANVPIDVFADEISFYELGSEAMDQFREDEGFIKDPETLLPTNDFHRQFWLLFEYPESSSAARGVAVVSVLVVVISITIFCLETLPEFREDRELKVVRDPSINTNKTGLSQTMFTDPFFMVESTCIVWFTFELVLRFVVCPSKTDFFKNIMNIIDIISIIPYFATLITELVQETEPSAQQNMSLAILRIIRLVRVFRIFKLSRHSKGLQILGQTLKASMRELGLLIFFLFIGVILFSSAVYFAEVDEPESHFSSIPDGFWWAVVTMTTVGYGDMCPTTPGGKIVGTLCAIAGVLTIALPVPVIVSNFNYFYHRETENEEKPNIPGELDKILNSMGSRMGSTESLNKTNGSCSAEKSRK.

The interval 25 to 44 is disordered; the sequence is EPGYATDFDPTSSKGRPGSS. The helical transmembrane segment at 218-238 threads the bilayer; the sequence is VAVVSVLVVVISITIFCLETL. The helical transmembrane segment at 271–292 threads the bilayer; the sequence is FFMVESTCIVWFTFELVLRFVV. C293 carries the S-palmitoyl cysteine lipid modification. Residues 303-323 traverse the membrane as a helical segment; the sequence is IMNIIDIISIIPYFATLITEL. A helical; Voltage-sensor membrane pass occupies residues 339 to 358; that stretch reads ILRIIRLVRVFRIFKLSRHS. Residues 375–395 traverse the membrane as a helical segment; that stretch reads LGLLIFFLFIGVILFSSAVYF. Positions 421–426 match the Selectivity filter motif; that stretch reads TVGYGD. The helical transmembrane segment at 436-456 threads the bilayer; that stretch reads IVGTLCAIAGVLTIALPVPVI. The tract at residues 489–511 is disordered; that stretch reads SRMGSTESLNKTNGSCSAEKSRK.

It belongs to the potassium channel family. A (Shaker) (TC 1.A.1.2) subfamily. Kv1.8/KCNA10 sub-subfamily. In terms of assembly, homotetramer. Interacts with KCN4B/POMP. Interaction with KCN4B/POMP is necessary for the modulation of channel activity by cAMP. As to expression, expressed strongly in the inner ear and weakly in skeletal muscle. Not detected in other tissues.

It is found in the membrane. It catalyses the reaction K(+)(in) = K(+)(out). Its activity is regulated as follows. The channel activity is up-regulated by cAMP. In terms of biological role, voltage-gated potassium ion channel that mediates K(+) permeability of excitable membranes. When opened in response to the voltage difference across the membrane, KCNA10 channel selectively allows the flow of potassium ions across the membrane down their electrochemical gradient. The protein is Potassium voltage-gated channel subfamily A member 10 of Mus musculus (Mouse).